The following is a 76-amino-acid chain: Conotoxin Cal5a L1 (76 aa).

A signal peptide spans 1 to 22 (MRFYIGLMAALMLTSILRTDSA). The propeptide occupies 23 to 42 (SVDQTGAEGGLALIERVIRQ). P50 is modified (4-hydroxyproline). P58 is modified (4-hydroxyproline; in form cal5a, and form cal5b). A 4-hydroxyproline; in form cal5a, form cal5b, and form cal5c modification is found at P62. P64 carries the post-translational modification 4-hydroxyproline; in form cal5a, form cal5b, form cal5c, and form cal5d.

Post-translationally, contains 2 disulfide bonds that can be either 'C1-C3, C2-C4' or 'C1-C4, C2-C3', since these disulfide connectivities have been observed for conotoxins with cysteine framework V (for examples, see AC P0DQQ7 and AC P81755). In terms of processing, five different peptides have been described after total venom examination by HPLC-MS. Cal5a is the longest. Cal5b-Cal5e are identical in length but are differentially hydroxylated. It is possible that hydroxylation and proteolysis at position 53 are incomplete in some of these peptides. Expressed by the venom duct.

The protein localises to the secreted. Probable neurotoxin with unknown target. Possibly targets ion channels. This Californiconus californicus (California cone) protein is Conotoxin Cal5a L1.